A 166-amino-acid polypeptide reads, in one-letter code: Endoribonuclease YbeY (166 aa).

Zn(2+) contacts are provided by His131, His135, and His141.

Belongs to the endoribonuclease YbeY family. Zn(2+) serves as cofactor.

The protein resides in the cytoplasm. Functionally, single strand-specific metallo-endoribonuclease involved in late-stage 70S ribosome quality control and in maturation of the 3' terminus of the 16S rRNA. This is Endoribonuclease YbeY from Dehalococcoides mccartyi (strain CBDB1).